Reading from the N-terminus, the 118-residue chain is Small ribosomal subunit protein uS13 (118 aa).

Residues 94-118 are disordered; the sequence is SLPLRGQRTKTNARTRKGPRKPIKK.

This sequence belongs to the universal ribosomal protein uS13 family. As to quaternary structure, part of the 30S ribosomal subunit. Forms a loose heterodimer with protein S19. Forms two bridges to the 50S subunit in the 70S ribosome.

Functionally, located at the top of the head of the 30S subunit, it contacts several helices of the 16S rRNA. In the 70S ribosome it contacts the 23S rRNA (bridge B1a) and protein L5 of the 50S subunit (bridge B1b), connecting the 2 subunits; these bridges are implicated in subunit movement. Contacts the tRNAs in the A and P-sites. The protein is Small ribosomal subunit protein uS13 of Aliivibrio fischeri (strain ATCC 700601 / ES114) (Vibrio fischeri).